The chain runs to 85 residues: UPF0473 protein CLK_1946 (85 aa).

The protein belongs to the UPF0473 family.

The chain is UPF0473 protein CLK_1946 from Clostridium botulinum (strain Loch Maree / Type A3).